Reading from the N-terminus, the 208-residue chain is MKVVEVKHPLVKHKIGLMREGDISTKRFRELAKEVGSLLTYEATSDFETEKVTIDGWNGPVEVDQIKGKKVTVVPILRAGLGMMDGVLEHMPSARVSVVGIYRDEETLQPVPYFEKIVSNIEERLALVIDPMLATGGSMIATIDLLKKKGCQSIKVLVLVAAPEGIKALEAAHPDVELYCASVDQGLNEKGYIVPGLGDAGDKIFGTK.

5-phospho-alpha-D-ribose 1-diphosphate is bound by residues Arg-78, Arg-103, and 130-138 (DPMLATGGS). Uracil is bound by residues Ile-193 and 198–200 (GDA). Asp-199 contributes to the 5-phospho-alpha-D-ribose 1-diphosphate binding site.

Belongs to the UPRTase family. It depends on Mg(2+) as a cofactor.

It catalyses the reaction UMP + diphosphate = 5-phospho-alpha-D-ribose 1-diphosphate + uracil. Its pathway is pyrimidine metabolism; UMP biosynthesis via salvage pathway; UMP from uracil: step 1/1. Allosterically activated by GTP. Catalyzes the conversion of uracil and 5-phospho-alpha-D-ribose 1-diphosphate (PRPP) to UMP and diphosphate. The chain is Uracil phosphoribosyltransferase from Aeromonas salmonicida (strain A449).